The primary structure comprises 606 residues: Pentatricopeptide repeat-containing protein At1g31920 (606 aa).

PPR repeat units follow at residues Cys96 to Pro130, Asp131 to Ala165, Asp166 to Ser200, Trp201 to Glu227, Glu233 to Asn263, Asn268 to Arg298, Asn299 to Pro333, Asp334 to Glu368, and Thr370 to Val404. The interval Ile405 to Lys480 is type E motif. The interval Gly481 to Lys511 is type E(+) motif. The tract at residues Phe512–Trp606 is type DYW motif.

The protein belongs to the PPR family. PCMP-H subfamily.

This Arabidopsis thaliana (Mouse-ear cress) protein is Pentatricopeptide repeat-containing protein At1g31920 (PCMP-H11).